Reading from the N-terminus, the 389-residue chain is MGQNLSTSNPLGFFPDHQLDPAFRANTNNPDWDFNPNKDTWPDANKVGAGAFGLGFTPPHGGLLGWSPQAQGIMQTLPANPPPASTNRQSGRQPTPLSPPLRTTHPQAMQWNSTTFHQTLQDPRVRGLYLPAGGSSSGTVNPVPTTASPTLSTSSRIGDPALNMENITSGFLGPLLVLQAGFFLLTRILTIPQSLDSWWTSLSFLGGTTVCLGQNSQSPTSNHSPTSCPPTCVGYRWMCLRRFIIFLFILLLCLIFLLVLLDYQGMLPVCPLIPGSSTTSTGPCRTCTTPAQGTSMYPSCCCTKPSDGNCTCIPIPSSWAFGKFLWEWASARFSWLSLLVPFVQWFVGLSPTVWLSVIWMMWYWGPSLYNTLSPFLPLLPIFFYLWVYI.

Met1 carries the N-acetylmethionine modification. Residue Gly2 is the site of N-myristoyl glycine; by host attachment. The pre-S1 stretch occupies residues 2 to 108; the sequence is GQNLSTSNPL…PPLRTTHPQA (107 aa). Positions 2–163 are pre-S; sequence GQNLSTSNPL…SSRIGDPALN (162 aa). Over 2–170 the chain is Virion surface; in external conformation; that stretch reads GQNLSTSNPL…ALNMENITSG (169 aa). Topologically, residues 2-242 are intravirion; in internal conformation; the sequence is GQNLSTSNPL…VGYRWMCLRR (241 aa). 2 disordered regions span residues 76–102 and 133–154; these read TLPANPPPASTNRQSGRQPTPLSPPLR and GGSSSGTVNPVPTTASPTLSTS. A compositionally biased stretch (polar residues) spans 85–95; the sequence is STNRQSGRQPT. The tract at residues 109-163 is pre-S2; the sequence is MQWNSTTFHQTLQDPRVRGLYLPAGGSSSGTVNPVPTTASPTLSTSSRIGDPALN. The span at 142–154 shows a compositional bias: low complexity; it reads PVPTTASPTLSTS. Residues 171 to 191 form a helical membrane-spanning segment; the sequence is FLGPLLVLQAGFFLLTRILTI. Residues 192–242 are Intravirion; in external conformation-facing; it reads PQSLDSWWTSLSFLGGTTVCLGQNSQSPTSNHSPTSCPPTCVGYRWMCLRR. The chain crosses the membrane as a helical span at residues 243 to 263; the sequence is FIIFLFILLLCLIFLLVLLDY. Residues 264-337 lie on the Virion surface side of the membrane; sequence QGMLPVCPLI…WASARFSWLS (74 aa). The N-linked (GlcNAc...) asparagine; by host glycan is linked to Asn309. A helical membrane pass occupies residues 338 to 358; it reads LLVPFVQWFVGLSPTVWLSVI. At 359-364 the chain is on the intravirion side; that stretch reads WMMWYW. The chain crosses the membrane as a helical span at residues 365–387; the sequence is GPSLYNTLSPFLPLLPIFFYLWV. The Virion surface segment spans residues 388 to 389; it reads YI.

It belongs to the orthohepadnavirus major surface antigen family. In terms of assembly, in its internal form (Li-HBsAg), interacts with the capsid protein and with the isoform S. Interacts with host chaperone CANX. As to quaternary structure, associates with host chaperone CANX through its pre-S2 N glycan; this association may be essential for isoform M proper secretion. Interacts with isoform L. Interacts with the antigens of satellite virus HDV (HDVAgs); this interaction is required for encapsidation of HDV genomic RNA. Post-translationally, isoform M is N-terminally acetylated by host at a ratio of 90%, and N-glycosylated by host at the pre-S2 region. Myristoylated.

It is found in the virion membrane. The large envelope protein exists in two topological conformations, one which is termed 'external' or Le-HBsAg and the other 'internal' or Li-HBsAg. In its external conformation the protein attaches the virus to cell receptors and thereby initiating infection. This interaction determines the species specificity and liver tropism. This attachment induces virion internalization predominantly through caveolin-mediated endocytosis. The large envelope protein also assures fusion between virion membrane and endosomal membrane. In its internal conformation the protein plays a role in virion morphogenesis and mediates the contact with the nucleocapsid like a matrix protein. In terms of biological role, the middle envelope protein plays an important role in the budding of the virion. It is involved in the induction of budding in a nucleocapsid independent way. In this process the majority of envelope proteins bud to form subviral lipoprotein particles of 22 nm of diameter that do not contain a nucleocapsid. This is Large envelope protein from Homo sapiens (Human).